Consider the following 425-residue polypeptide: Glutamyl-tRNA(Gln) amidotransferase subunit A (425 aa).

Catalysis depends on charge relay system residues K29 and S104. Residue S128 is the Acyl-ester intermediate of the active site.

This sequence belongs to the amidase family. GatA subfamily. As to quaternary structure, heterotrimer of A, B and C subunits.

It carries out the reaction L-glutamyl-tRNA(Gln) + L-glutamine + ATP + H2O = L-glutaminyl-tRNA(Gln) + L-glutamate + ADP + phosphate + H(+). Its function is as follows. Allows the formation of correctly charged Gln-tRNA(Gln) through the transamidation of misacylated Glu-tRNA(Gln) in organisms which lack glutaminyl-tRNA synthetase. The reaction takes place in the presence of glutamine and ATP through an activated gamma-phospho-Glu-tRNA(Gln). The polypeptide is Glutamyl-tRNA(Gln) amidotransferase subunit A (Haloarcula marismortui (strain ATCC 43049 / DSM 3752 / JCM 8966 / VKM B-1809) (Halobacterium marismortui)).